The sequence spans 595 residues: MGDKPTLVTLLTVAVSSPPPSSPLPLVSFTELLLPPPSVAAAAVAATATSEVGEKTAEQEVAAADPETGNERRENRENEGGETRTTGTTAVKRSHDGIPRQLAERLRLCRHMDPEQDYRLPAQDVVTSWIEALRDADRDNYGRCVRHAKIHRSASHLTAYESYLVSITEQYNTASNVTEKASYVQGCIFLSFPVIYNNTQGCGYKYDWSNVVTPKAAYAELFFLLCSTSESSVVLQPLITKGGLCSSMAVYDEETMRQSQAVQIGFLHTQLVMVPFVPHACPHYAVPFTTPGKPGCGGAPSGVAGLEEAAPFGRVSVTRHGATLLCRVDHLTWISKRVTTYGHKKITRYLAQFRGTMDDDEAALPGEDEAWIASKNVQYEFMGLIFTVNVDSLCVDAEQRQLLGTVATSFCHRVSDKITARNMPRAFSFYLLTSAQRGYDLRFSRNPSLFFSGDALNCPLLNEPNVFSLTVHAPYDIHFGVQPRQTVELDLRYVQITDRCFLVANLPHEDAFYTGLSVWRGGEPLKVTLWTRTRSIVIPQGTPIATLYQITEGDGNVYSYNHHTVFRQMHAAGTTTFFLGDMQLPADNFLTSPHP.

The first 23 residues, 1–23 (MGDKPTLVTLLTVAVSSPPPSSP), serve as a signal peptide directing secretion. The tract at residues 47-94 (TATSEVGEKTAEQEVAAADPETGNERRENRENEGGETRTTGTTAVKRS) is disordered. A compositionally biased stretch (basic and acidic residues) spans 69-82 (GNERRENRENEGGE). N-linked (GlcNAc...) asparagine; by host glycans are attached at residues Asn176 and Asn197.

The protein belongs to the herpesviridae U10 family. As to quaternary structure, interacts with host CGAS.

The protein resides in the host cytoplasm. It is found in the host nucleus. Plays a role in the inhibition of host innate immune system by targeting host CGAS and promoting dissociation of DNA from CGAS, thereby inhibiting the enzymatic activity of CGAS. This is Protein UL31 from Homo sapiens (Human).